Consider the following 69-residue polypeptide: AKDGYLVNKSTGCKYECFWLGKNEFCDKECKAKNQGGSYGYCYSFACWCEGLPESTSTYPLPNKSCGRK.

Residue Ala-1 is a signal peptide. The region spanning 2–67 is the LCN-type CS-alpha/beta domain; the sequence is KDGYLVNKST…TYPLPNKSCG (66 aa). Cystine bridges form between Cys-13/Cys-66, Cys-17/Cys-42, Cys-26/Cys-47, and Cys-30/Cys-49. Cysteine amide is present on Cys-66. The propeptide occupies 67–69; that stretch reads GRK.

It belongs to the long (4 C-C) scorpion toxin superfamily. Sodium channel inhibitor family. Beta subfamily. In terms of tissue distribution, expressed by the venom gland.

It is found in the secreted. Its function is as follows. Beta toxins bind voltage-independently at site-4 of sodium channels (Nav) and shift the voltage of activation toward more negative potentials thereby affecting sodium channel activation and promoting spontaneous and repetitive firing. The protein is Neurotoxin Cex3 of Centruroides exilicauda (Bark scorpion).